The chain runs to 317 residues: NAD-dependent protein deacetylase Sirt6 (317 aa).

In terms of domain architecture, Deacetylase sirtuin-type spans aspartate 27–glutamate 273. Alanine 53, threonine 57, phenylalanine 64, arginine 65, tryptophan 71, glutamine 113, and histidine 133 together coordinate NAD(+). Residue histidine 133 is the Proton acceptor of the active site. Residues cysteine 141, cysteine 144, cysteine 166, and cysteine 177 each contribute to the Zn(2+) site. NAD(+)-binding residues include glycine 215, asparagine 241, glutamine 243, and valine 259.

It belongs to the sirtuin family. Class IV subfamily. Zn(2+) is required as a cofactor. As to expression, widely expressed.

The protein localises to the nucleus. It localises to the chromosome. It catalyses the reaction N(6)-acetyl-L-lysyl-[protein] + NAD(+) + H2O = 2''-O-acetyl-ADP-D-ribose + nicotinamide + L-lysyl-[protein]. NAD-dependent histone deacylase that acts as a regulator of life span. The protein is NAD-dependent protein deacetylase Sirt6 of Drosophila melanogaster (Fruit fly).